A 415-amino-acid polypeptide reads, in one-letter code: Phosphoribosylamine--glycine ligase (415 aa).

An ATP-grasp domain is found at 108–311 (KKIMEKYNIP…LMQHIIDLDE (204 aa)). 134-191 (IENCELPVVVKKDGLAAGKGVIIADTIEAARSAIEIMYGDEEEGTVVFETFLEGEEFS) provides a ligand contact to ATP. The Mg(2+) site is built by Glu-281 and Asn-283.

This sequence belongs to the GARS family. It depends on Mg(2+) as a cofactor. Mn(2+) is required as a cofactor.

The catalysed reaction is 5-phospho-beta-D-ribosylamine + glycine + ATP = N(1)-(5-phospho-beta-D-ribosyl)glycinamide + ADP + phosphate + H(+). The protein operates within purine metabolism; IMP biosynthesis via de novo pathway; N(1)-(5-phospho-D-ribosyl)glycinamide from 5-phospho-alpha-D-ribose 1-diphosphate: step 2/2. This chain is Phosphoribosylamine--glycine ligase, found in Staphylococcus aureus (strain COL).